Reading from the N-terminus, the 513-residue chain is Secreted LysM effector Vd6LysM (513 aa).

The N-terminal stretch at 1–19 is a signal peptide; the sequence is MSFIKSLLLAAAAVASVSA. LysM domains are found at residues 38–85, 136–182, 219–265, and 302–348; these read SYWV…SYCV, KFHW…NVCV, and KFHW…QVCV. The span at 357-367 shows a compositional bias: low complexity; that stretch reads TTTRPPTTTAP. The segment at 357–377 is disordered; sequence TTTRPPTTTAPGNGVSTPQPT. LysM domains follow at residues 387 to 433 and 465 to 511; these read KFHW…NVCV.

The protein belongs to the secreted LysM effector family.

Its function is as follows. Might have a role in sequestration of chitin oligosaccharides (breakdown products of fungal cell walls that are released during invasion and act as triggers of host immunity) to dampen host defense. Does not play an important role during host colonization. In Verticillium dahliae (strain VdLs.17 / ATCC MYA-4575 / FGSC 10137) (Verticillium wilt), this protein is Secreted LysM effector Vd6LysM.